The sequence spans 274 residues: Tyrosinase (274 aa).

Cu cation is bound by residues H38, H54, H63, H190, H194, and H216.

The protein belongs to the tyrosinase family. Cu(2+) serves as cofactor.

It carries out the reaction 2 L-dopa + O2 = 2 L-dopaquinone + 2 H2O. The catalysed reaction is L-tyrosine + O2 = L-dopaquinone + H2O. Its function is as follows. This is a copper-containing oxidase that functions in the formation of pigments such as melanins and other polyphenolic compounds. The polypeptide is Tyrosinase (melC2) (Streptomyces glaucescens).